The sequence spans 137 residues: Flavodoxin (137 aa).

In terms of domain architecture, Flavodoxin-like spans 2–137 (VEIVYWSGTG…KELGEAAAKA (136 aa)).

It belongs to the flavodoxin family. It depends on FMN as a cofactor.

In terms of biological role, low-potential electron donor to a number of redox enzymes. This is Flavodoxin from Megasphaera elsdenii.